The sequence spans 214 residues: Thymidylate kinase (214 aa).

Residue 14 to 21 (GLEGAGKT) participates in ATP binding.

The protein belongs to the thymidylate kinase family.

The catalysed reaction is dTMP + ATP = dTDP + ADP. Phosphorylation of dTMP to form dTDP in both de novo and salvage pathways of dTTP synthesis. The polypeptide is Thymidylate kinase (Mannheimia succiniciproducens (strain KCTC 0769BP / MBEL55E)).